The primary structure comprises 177 residues: Bifunctional protein PyrR (177 aa).

A PRPP-binding motif is present at residues valine 99–threonine 111.

The protein belongs to the purine/pyrimidine phosphoribosyltransferase family. PyrR subfamily.

It catalyses the reaction UMP + diphosphate = 5-phospho-alpha-D-ribose 1-diphosphate + uracil. Functionally, regulates the transcription of the pyrimidine nucleotide (pyr) operon in response to exogenous pyrimidines. In terms of biological role, also displays a weak uracil phosphoribosyltransferase activity which is not physiologically significant. The protein is Bifunctional protein PyrR of Geobacter sulfurreducens (strain ATCC 51573 / DSM 12127 / PCA).